We begin with the raw amino-acid sequence, 196 residues long: ATP-dependent Clp protease proteolytic subunit (196 aa).

Serine 101 (nucleophile) is an active-site residue. Histidine 126 is an active-site residue.

This sequence belongs to the peptidase S14 family. In terms of assembly, component of the chloroplastic Clp protease core complex.

It localises to the plastid. It is found in the chloroplast stroma. It carries out the reaction Hydrolysis of proteins to small peptides in the presence of ATP and magnesium. alpha-casein is the usual test substrate. In the absence of ATP, only oligopeptides shorter than five residues are hydrolyzed (such as succinyl-Leu-Tyr-|-NHMec, and Leu-Tyr-Leu-|-Tyr-Trp, in which cleavage of the -Tyr-|-Leu- and -Tyr-|-Trp bonds also occurs).. Cleaves peptides in various proteins in a process that requires ATP hydrolysis. Has a chymotrypsin-like activity. Plays a major role in the degradation of misfolded proteins. This is ATP-dependent Clp protease proteolytic subunit from Helianthus annuus (Common sunflower).